Reading from the N-terminus, the 30-residue chain is Cliotide T19 (30 aa).

A cross-link (cyclopeptide (Gly-Asn)) is located at residues 1–30 (GSVIKCGESCLLGKCYTPGCTCSRPICKKN). 3 cysteine pairs are disulfide-bonded: Cys-6-Cys-20, Cys-10-Cys-22, and Cys-15-Cys-27.

In terms of processing, contains 3 disulfide bonds. Post-translationally, this is a cyclic peptide. Expressed in root nodules but not in seed.

In terms of biological role, probably participates in a plant defense mechanism. Active against Gram-negative bacterium E.coli ATCC 700926 (MIC=0.6 uM) under low-salt conditions. Not active against Gram-positive bacterium S.aureus ATCC 12600 up to a concentration of 100 uM under low-salt conditions. Exhibits immunomodulatory activity but no cytotoxicity in vitro. This chain is Cliotide T19, found in Clitoria ternatea (Butterfly pea).